The sequence spans 141 residues: Large-conductance mechanosensitive channel (141 aa).

3 helical membrane passes run 14-34 (VVDL…VNSL), 38-58 (VIMP…YYIP), and 82-102 (GQFL…FMVI).

It belongs to the MscL family. In terms of assembly, homopentamer.

It is found in the cell inner membrane. Functionally, channel that opens in response to stretch forces in the membrane lipid bilayer. May participate in the regulation of osmotic pressure changes within the cell. The protein is Large-conductance mechanosensitive channel of Methylorubrum extorquens (strain CM4 / NCIMB 13688) (Methylobacterium extorquens).